Reading from the N-terminus, the 338-residue chain is Large ribosomal subunit protein uL10 (338 aa).

The segment at 303 to 338 (VEVSAAPAAEEEKEEEKKEEEKKEEDTGAAGLALLF) is disordered. Over residues 317–328 (EEKKEEEKKEED) the composition is skewed to basic and acidic residues.

Belongs to the universal ribosomal protein uL10 family. Part of the 50S ribosomal subunit. Forms part of the ribosomal stalk which helps the ribosome interact with GTP-bound translation factors. Forms a heptameric L10(L12)2(L12)2(L12)2 complex, where L10 forms an elongated spine to which the L12 dimers bind in a sequential fashion.

Functionally, forms part of the ribosomal stalk, playing a central role in the interaction of the ribosome with GTP-bound translation factors. This chain is Large ribosomal subunit protein uL10, found in Methanocaldococcus jannaschii (strain ATCC 43067 / DSM 2661 / JAL-1 / JCM 10045 / NBRC 100440) (Methanococcus jannaschii).